The following is a 506-amino-acid chain: NAD(P)H-quinone oxidoreductase chain 4, chloroplastic (506 aa).

Helical transmembrane passes span 5–25 (FPLL…IPFL), 35–55 (WYTL…FIYK), 88–108 (MPLI…AWPI), 114–134 (LFYF…LSQD), 135–155 (ILLF…LLSL), 168–188 (FILY…TMAF), 209–229 (ALEI…LPAF), 243–263 (HYST…YGLI), 275–295 (VIFS…GALT), 309–329 (SSIS…DLGL), 331–351 (GAMM…FLAG), 386–406 (SLAL…LGFL), 415–435 (FIAL…IYLL), and 463–483 (IFIM…PNLT).

This sequence belongs to the complex I subunit 4 family.

It is found in the plastid. Its subcellular location is the chloroplast thylakoid membrane. The catalysed reaction is a plastoquinone + NADH + (n+1) H(+)(in) = a plastoquinol + NAD(+) + n H(+)(out). It carries out the reaction a plastoquinone + NADPH + (n+1) H(+)(in) = a plastoquinol + NADP(+) + n H(+)(out). This is NAD(P)H-quinone oxidoreductase chain 4, chloroplastic from Chaetosphaeridium globosum (Charophycean green alga).